Reading from the N-terminus, the 267-residue chain is Staphylococcal secretory antigen ssaA2 (267 aa).

The N-terminal stretch at 1 to 27 (MKKIATATIATAGFATIAIASGNQAHA) is a signal peptide. Repeat copies occupy residues 83–85 (YNN), 86–88 (YNN), 89–91 (YNN), 95–97 (YNN), 101–103 (YNN), 104–106 (YSN), and 113–115 (YNN). The segment at 83–115 (YNNYNNYNNGYSYNNYSRYNNYSNNNQSYNYNN) is 7 X 3 AA repeats of Y-[NS]-N. The 122-residue stretch at 146-267 (MAPSSNGRSI…SQAAGYNFIH (122 aa)) folds into the Peptidase C51 domain.

Its subcellular location is the secreted. In terms of biological role, not known; immunogenic protein. This Staphylococcus aureus (strain NCTC 8325 / PS 47) protein is Staphylococcal secretory antigen ssaA2 (ssaA2).